The following is a 365-amino-acid chain: Histidinol-phosphate aminotransferase (365 aa).

Lys-223 bears the N6-(pyridoxal phosphate)lysine mark.

This sequence belongs to the class-II pyridoxal-phosphate-dependent aminotransferase family. Histidinol-phosphate aminotransferase subfamily. As to quaternary structure, homodimer. Pyridoxal 5'-phosphate serves as cofactor.

It carries out the reaction L-histidinol phosphate + 2-oxoglutarate = 3-(imidazol-4-yl)-2-oxopropyl phosphate + L-glutamate. Its pathway is amino-acid biosynthesis; L-histidine biosynthesis; L-histidine from 5-phospho-alpha-D-ribose 1-diphosphate: step 7/9. The sequence is that of Histidinol-phosphate aminotransferase from Brucella abortus (strain 2308).